Consider the following 216-residue polypeptide: Probable GTP-binding protein EngB (216 aa).

An EngB-type G domain is found at Gly37 to Glu214. GTP contacts are provided by residues Gly45–Ser52, Gly72–Glu76, Asp92–Gly95, Thr159–Asp162, and Thr193–Ser195. Positions 52 and 74 each coordinate Mg(2+).

This sequence belongs to the TRAFAC class TrmE-Era-EngA-EngB-Septin-like GTPase superfamily. EngB GTPase family. Mg(2+) is required as a cofactor.

In terms of biological role, necessary for normal cell division and for the maintenance of normal septation. This chain is Probable GTP-binding protein EngB, found in Rhodopseudomonas palustris (strain ATCC BAA-98 / CGA009).